Reading from the N-terminus, the 341-residue chain is Dihydroorotate dehydrogenase (quinone) (341 aa).

FMN is bound by residues 59-63 (AGLDK) and T83. K63 is a substrate binding site. Residue 108 to 112 (NRMGF) participates in substrate binding. N136 and N169 together coordinate FMN. Position 169 (N169) interacts with substrate. S172 serves as the catalytic Nucleophile. A substrate-binding site is contributed by N174. The FMN site is built by K214 and T242. A substrate-binding site is contributed by 243 to 244 (NT). FMN contacts are provided by residues G265, G294, and 315-316 (YS).

The protein belongs to the dihydroorotate dehydrogenase family. Type 2 subfamily. In terms of assembly, monomer. FMN serves as cofactor.

The protein localises to the cell membrane. It catalyses the reaction (S)-dihydroorotate + a quinone = orotate + a quinol. It functions in the pathway pyrimidine metabolism; UMP biosynthesis via de novo pathway; orotate from (S)-dihydroorotate (quinone route): step 1/1. In terms of biological role, catalyzes the conversion of dihydroorotate to orotate with quinone as electron acceptor. The polypeptide is Dihydroorotate dehydrogenase (quinone) (Neisseria meningitidis serogroup C (strain 053442)).